We begin with the raw amino-acid sequence, 1233 residues long: Anion exchange protein 3 (1233 aa).

A compositionally biased stretch (pro residues) spans 1–11 (MANGVIPPPGG). 2 disordered regions span residues 1–320 (MANG…RRPH) and 431–500 (DDKD…DGHR). Over 1 to 709 (MANGVIPPPG…DLRDALHSQC (709 aa)) the chain is Cytoplasmic. A compositionally biased stretch (basic and acidic residues) spans 58–73 (DPEKPSRSFSERDFAF). Composition is skewed to basic residues over residues 74–97 (HRHI…KLRR) and 104–113 (RHTRRKRKKE). Acidic residues predominate over residues 137-153 (GEEEEEEEEEGESETEA). A phosphoserine mark is found at serine 168, serine 171, serine 176, and serine 199. Positions 201 to 216 (QRSVSSSSPRARAPRV) are enriched in low complexity. Basic and acidic residues predominate over residues 268–290 (DDMKSHRLEDNPGVRRHLVKEPS). Arginine 296 is modified (omega-N-methylarginine). Over residues 437–450 (SFPRNPSSSSVNSV) the composition is skewed to low complexity. The span at 482 to 500 (HDPDAKERPLHMPGGDGHR) shows a compositional bias: basic and acidic residues. The next 4 helical transmembrane spans lie at 710 to 732 (VAAV…GLLG), 738 to 775 (LMGV…LLVF), 795 to 817 (VWVG…TFLV), and 827 to 848 (IFAF…YKVF). Positions 710–1233 (VAAVLFIYFA…DEYNELHMPV (524 aa)) are membrane (anion exchange). Asparagine 874 carries N-linked (GlcNAc...) asparagine glycosylation. A helical membrane pass occupies residues 894 to 911 (ALLSLILMLGTFLIAFFL). Topologically, residues 912–926 (RKFRNSRFLGGKARR) are cytoplasmic. A run of 5 helical transmembrane segments spans residues 927–947 (IIGD…DYSI), 981–1003 (PFPP…LIFM), 1029–1050 (LLLI…LTAA), 1084–1129 (VTGV…IQLS), and 1156–1192 (MHLF…TVPL). A lipid anchor (S-palmitoyl cysteine) is attached at cysteine 1166.

This sequence belongs to the anion exchanger (TC 2.A.31) family.

It localises to the cell membrane. It carries out the reaction hydrogencarbonate(in) + chloride(out) = hydrogencarbonate(out) + chloride(in). Its function is as follows. Sodium-independent anion exchanger which mediates the electroneutral exchange of chloride for bicarbonate ions across the cell membrane. May be involved in the regulation of intracellular pH, and the modulation of cardiac action potential. This Oryctolagus cuniculus (Rabbit) protein is Anion exchange protein 3 (SLC4A3).